Consider the following 125-residue polypeptide: Protein AC4 (125 aa).

The protein belongs to the geminiviridae protein AC4/C4 family.

Its function is as follows. Pathogenicity determinant. May act as a suppressor of RNA-mediated gene silencing, also known as post-transcriptional gene silencing (PTGS), a mechanism of plant viral defense that limits the accumulation of viral RNAs. This chain is Protein AC4, found in Cucurbita moschata (Winter crookneck squash).